The sequence spans 517 residues: Bifunctional purine biosynthesis protein PurH (517 aa).

One can recognise an MGS-like domain in the interval 1–145 (MSPLALVSVS…KNHADVAVLV (145 aa)).

Belongs to the PurH family.

The catalysed reaction is (6R)-10-formyltetrahydrofolate + 5-amino-1-(5-phospho-beta-D-ribosyl)imidazole-4-carboxamide = 5-formamido-1-(5-phospho-D-ribosyl)imidazole-4-carboxamide + (6S)-5,6,7,8-tetrahydrofolate. It carries out the reaction IMP + H2O = 5-formamido-1-(5-phospho-D-ribosyl)imidazole-4-carboxamide. It functions in the pathway purine metabolism; IMP biosynthesis via de novo pathway; 5-formamido-1-(5-phospho-D-ribosyl)imidazole-4-carboxamide from 5-amino-1-(5-phospho-D-ribosyl)imidazole-4-carboxamide (10-formyl THF route): step 1/1. The protein operates within purine metabolism; IMP biosynthesis via de novo pathway; IMP from 5-formamido-1-(5-phospho-D-ribosyl)imidazole-4-carboxamide: step 1/1. The protein is Bifunctional purine biosynthesis protein PurH of Prochlorococcus marinus (strain MIT 9515).